Reading from the N-terminus, the 296-residue chain is Ribosomal RNA small subunit methyltransferase A (296 aa).

Residues Asn32, Leu34, Gly59, Glu80, Asp105, and Asn130 each coordinate S-adenosyl-L-methionine.

Belongs to the class I-like SAM-binding methyltransferase superfamily. rRNA adenine N(6)-methyltransferase family. RsmA subfamily.

Its subcellular location is the cytoplasm. The enzyme catalyses adenosine(1518)/adenosine(1519) in 16S rRNA + 4 S-adenosyl-L-methionine = N(6)-dimethyladenosine(1518)/N(6)-dimethyladenosine(1519) in 16S rRNA + 4 S-adenosyl-L-homocysteine + 4 H(+). In terms of biological role, specifically dimethylates two adjacent adenosines (A1518 and A1519) in the loop of a conserved hairpin near the 3'-end of 16S rRNA in the 30S particle. May play a critical role in biogenesis of 30S subunits. This is Ribosomal RNA small subunit methyltransferase A from Ligilactobacillus salivarius (strain UCC118) (Lactobacillus salivarius).